The following is a 611-amino-acid chain: O-fucosyltransferase 8 (611 aa).

Residues 1–29 (MGKQGSPRSPRPETIDKEEKFGRRSLDSL) are disordered. The span at 10 to 26 (PRPETIDKEEKFGRRSL) shows a compositional bias: basic and acidic residues. The chain crosses the membrane as a helical; Signal-anchor for type II membrane protein span at residues 78-98 (IVLMISVTGFIFCMDSIMVSI). Residues Asn-115, Asn-216, and Asn-270 are each glycosylated (N-linked (GlcNAc...) asparagine). Position 386–388 (386–388 (HLR)) interacts with substrate. Residue Asn-506 is glycosylated (N-linked (GlcNAc...) asparagine).

The protein belongs to the glycosyltransferase GT106 family.

Its subcellular location is the membrane. It functions in the pathway glycan metabolism. The sequence is that of O-fucosyltransferase 8 from Arabidopsis thaliana (Mouse-ear cress).